A 90-amino-acid chain; its full sequence is Acylphosphatase (90 aa).

The 86-residue stretch at threonine 3–proline 88 folds into the Acylphosphatase-like domain. Residues arginine 18 and asparagine 36 contribute to the active site.

This sequence belongs to the acylphosphatase family.

It carries out the reaction an acyl phosphate + H2O = a carboxylate + phosphate + H(+). The sequence is that of Acylphosphatase (acyP) from Cupriavidus pinatubonensis (strain JMP 134 / LMG 1197) (Cupriavidus necator (strain JMP 134)).